The chain runs to 398 residues: MPSHLDQTLAAALSERRAQYRYRQRKLLQSPQTPELVVDGKTYLAFCSNDYLGLANHPQVIAAQQQAAARWGAGSGASHLVAGHTQEHHALEEELAAFTGRQRALLFSTGYMANLGVISTLVGQGDGVFEDRLNHASLLDGGLLSGARFQRFLHSDINNLQARLRKTDAARKLVVVDGVFSMDGDCAPLPQLAQVCAQENAWLMVDDAHGFGVLGETGAGTCEHFGLDQQQVPVLMGTLGKALGSFGAFVAGSETLIETLINFARPYIYTTAMPPPVAAATRASLRLVQSEAWRRTHVQQLIAQFRNGAQDLGLQLMDSFSPVQPLLVGSEAKALAIAEALAHRGILIIAIRPPTVPVGSSRLRITLSAAHTEAQVAQLLDVLGEVMNSTAIRGLADD.

A substrate-binding site is contributed by R23. Pyridoxal 5'-phosphate is bound at residue 110–111 (GY). H135 provides a ligand contact to substrate. Pyridoxal 5'-phosphate-binding residues include S181, H209, and T238. K241 carries the N6-(pyridoxal phosphate)lysine modification. Position 355 (T355) interacts with substrate.

The protein belongs to the class-II pyridoxal-phosphate-dependent aminotransferase family. BioF subfamily. In terms of assembly, homodimer. The cofactor is pyridoxal 5'-phosphate.

The enzyme catalyses 6-carboxyhexanoyl-[ACP] + L-alanine + H(+) = (8S)-8-amino-7-oxononanoate + holo-[ACP] + CO2. It participates in cofactor biosynthesis; biotin biosynthesis. Its function is as follows. Catalyzes the decarboxylative condensation of pimeloyl-[acyl-carrier protein] and L-alanine to produce 8-amino-7-oxononanoate (AON), [acyl-carrier protein], and carbon dioxide. The sequence is that of 8-amino-7-oxononanoate synthase from Cellvibrio japonicus (strain Ueda107) (Pseudomonas fluorescens subsp. cellulosa).